The sequence spans 678 residues: UvrABC system protein B (678 aa).

The Helicase ATP-binding domain occupies 26–185 (EGLEDGEAFQ…LTTMQYTRND (160 aa)). ATP is bound at residue 39 to 46 (GVTGSGKT). The short motif at 92–115 (YYDYYQPEAYVPASDTYIAKDSSV) is the Beta-hairpin element. Residues 430–596 (QVDDLLGEIR…KLNKKITDIL (167 aa)) enclose the Helicase C-terminal domain. A disordered region spans residues 597–630 (EDSPYAPKPGASAAKLKAAEADGEYSPQEMQRMT). One can recognise a UVR domain in the interval 635 to 670 (ASEIKRMEKQMYQAAKDLDFELAAKLRDDLKRLKSS).

Belongs to the UvrB family. As to quaternary structure, forms a heterotetramer with UvrA during the search for lesions. Interacts with UvrC in an incision complex.

It is found in the cytoplasm. The UvrABC repair system catalyzes the recognition and processing of DNA lesions. A damage recognition complex composed of 2 UvrA and 2 UvrB subunits scans DNA for abnormalities. Upon binding of the UvrA(2)B(2) complex to a putative damaged site, the DNA wraps around one UvrB monomer. DNA wrap is dependent on ATP binding by UvrB and probably causes local melting of the DNA helix, facilitating insertion of UvrB beta-hairpin between the DNA strands. Then UvrB probes one DNA strand for the presence of a lesion. If a lesion is found the UvrA subunits dissociate and the UvrB-DNA preincision complex is formed. This complex is subsequently bound by UvrC and the second UvrB is released. If no lesion is found, the DNA wraps around the other UvrB subunit that will check the other stand for damage. In Hydrogenovibrio crunogenus (strain DSM 25203 / XCL-2) (Thiomicrospira crunogena), this protein is UvrABC system protein B.